A 603-amino-acid polypeptide reads, in one-letter code: Elongation factor 4 (603 aa).

A tr-type G domain is found at 7–189 (VRIRNFCIIA…AVVERVPPPP (183 aa)). Residues 19 to 24 (DHGKST) and 136 to 139 (NKID) each bind GTP.

The protein belongs to the TRAFAC class translation factor GTPase superfamily. Classic translation factor GTPase family. LepA subfamily.

The protein resides in the cell inner membrane. It catalyses the reaction GTP + H2O = GDP + phosphate + H(+). Required for accurate and efficient protein synthesis under certain stress conditions. May act as a fidelity factor of the translation reaction, by catalyzing a one-codon backward translocation of tRNAs on improperly translocated ribosomes. Back-translocation proceeds from a post-translocation (POST) complex to a pre-translocation (PRE) complex, thus giving elongation factor G a second chance to translocate the tRNAs correctly. Binds to ribosomes in a GTP-dependent manner. The polypeptide is Elongation factor 4 (Nostoc sp. (strain PCC 7120 / SAG 25.82 / UTEX 2576)).